We begin with the raw amino-acid sequence, 248 residues long: Endonuclease V (248 aa).

Mg(2+) contacts are provided by D54 and D118.

The protein belongs to the endonuclease V family. Mg(2+) is required as a cofactor.

The protein localises to the cytoplasm. It catalyses the reaction Endonucleolytic cleavage at apurinic or apyrimidinic sites to products with a 5'-phosphate.. Its function is as follows. DNA repair enzyme involved in the repair of deaminated bases. Selectively cleaves double-stranded DNA at the second phosphodiester bond 3' to a deoxyinosine leaving behind the intact lesion on the nicked DNA. This Natronomonas pharaonis (strain ATCC 35678 / DSM 2160 / CIP 103997 / JCM 8858 / NBRC 14720 / NCIMB 2260 / Gabara) (Halobacterium pharaonis) protein is Endonuclease V.